A 67-amino-acid polypeptide reads, in one-letter code: Beta-defensin 123 (67 aa).

The first 20 residues, methionine 1–glycine 20, serve as a signal peptide directing secretion. 3 disulfides stabilise this stretch: cysteine 25–cysteine 52, cysteine 32–cysteine 46, and cysteine 36–cysteine 53.

Belongs to the beta-defensin family.

It localises to the secreted. Its function is as follows. Has antibacterial activity. The chain is Beta-defensin 123 (DEFB123) from Gorilla gorilla gorilla (Western lowland gorilla).